A 1162-amino-acid polypeptide reads, in one-letter code: Reticulon-4 (1162 aa).

Met-1 bears the N-acetylmethionine mark. Positions 1-183 (MEDIDQSSLV…ALPAASEPVI (183 aa)) are disordered. Topologically, residues 1–988 (MEDIDQSSLV…LYWRDIKKTG (988 aa)) are cytoplasmic. 2 positions are modified to phosphoserine: Ser-7 and Ser-16. A compositionally biased stretch (low complexity) spans 7 to 16 (SSLVSSSADS). Residues 31–54 (EPEDEEDEEDEEEEEDDEDLEELE) are compositionally biased toward acidic residues. A compositionally biased stretch (pro residues) spans 85-99 (PPAPRGPLPAAPPTA). Ser-105 is subject to Phosphoserine. The span at 109-127 (SPAASAPSLPPAAAVLPSK) shows a compositional bias: low complexity. Phosphoserine occurs at positions 145, 165, 167, 329, and 344. Thr-348 carries the phosphothreonine modification. The span at 408 to 422 (SLEQKGHGKDSESRN) shows a compositional bias: basic and acidic residues. Residues 408-432 (SLEQKGHGKDSESRNENASFPRTPE) form a disordered region. At Ser-426 the chain carries Phosphoserine. Thr-430 is modified (phosphothreonine). Ser-489, Ser-690, Ser-727, Ser-768, and Ser-832 each carry phosphoserine. Residues 711–730 (ELVDDSSPESEPVDLFSDDS) are disordered. Residues 713 to 730 (VDDSSPESEPVDLFSDDS) show a composition bias toward acidic residues. A Phosphothreonine modification is found at Thr-834. A phosphoserine mark is found at Ser-857 and Ser-961. The Reticulon domain occupies 975–1162 (VVDLLYWRDI…KIPGLKRKAE (188 aa)). Residues 989-1009 (VVFGASLFLLLSLTVFSIVSV) form a helical membrane-spanning segment. At 1010-1078 (TAYIALALLS…VNSTIKELRR (69 aa)) the chain is on the lumenal side. Position 1074 is an N6-acetyllysine (Lys-1074). The chain crosses the membrane as a helical span at residues 1079–1099 (LFLVDDLVDSLKFAVLMWVFT). At 1100-1162 (YVGALFNGLT…KIPGLKRKAE (63 aa)) the chain is on the cytoplasmic side.

As to quaternary structure, binds to RTN4R. Interacts with ATL1. Interacts with TMEM170A. Interacts with RTN4IP1. In terms of assembly, interacts in trans with CNTNAP1. Interacts with REEP5. Interacts with GPR50. Interacts with synaptic plasticity regulator PANTS; the interaction results in enhanced RTN4-mediated inhibition of AMPA receptor clustering. Homodimer. Interacts with BAD/Bcl-xl and BCL2. Interact with RTN3. Interacts with NGBR. Interacts with SPTLC1. Interacts with GRAMD4. Interacts with CDH5. Interacts with BACE1 and BACE2. Interacts with REEP5. Interacts with RETREG3. As to quaternary structure, interacts with BACE1 and BACE2. Interacts with TMEM33. Expressed in cardiomyocytes (at protein level). Highly expressed in brain but not deteceted in aorta, femoral and carotid arteries. Main isoform expressed in neurons. In terms of tissue distribution, expressed in cardiomyocytes (at protein level). Expressed in splenocytes, T-cells, B-cells, bone marrow derived dendritic cells and macrophages (at protein level). Expressed in neurons. Highly expressed in endothelial cells and vascular smooth muscle cells, including blood vessels and mesenteric arteries. Expressed in bronchial and alveolar epithelial cells as well as vascular endothelial cells of lungs. As to expression, expressed in B-cells, bone marrow dendritic cells and macrophages (at protein level). Expressed in cardiomyocytes. In terms of tissue distribution, expressed at very low levels in neurons.

It is found in the endoplasmic reticulum membrane. The protein resides in the cell membrane. It localises to the synapse. Its subcellular location is the cell junction. Required to induce the formation and stabilization of endoplasmic reticulum (ER) tubules. They regulate membrane morphogenesis in the ER by promoting tubular ER production. They influence nuclear envelope expansion, nuclear pore complex formation and proper localization of inner nuclear membrane proteins. However each isoform have specific functions mainly depending on their tissue expression specificities. Functionally, developmental neurite growth regulatory factor with a role as a negative regulator of axon-axon adhesion and growth, and as a facilitator of neurite branching. Regulates neurite fasciculation, branching and extension in the developing nervous system. Involved in down-regulation of growth, stabilization of wiring and restriction of plasticity in the adult CNS. Regulates the radial migration of cortical neurons via an RTN4R-LINGO1 containing receptor complex. Acts as a negative regulator of central nervous system angiogenesis. Inhibits spreading, migration and sprouting of primary brain microvascular endothelial cells (MVECs). Also induces the retraction of MVECs lamellipodia and filopodia in a ROCK pathway-dependent manner. In terms of biological role, mainly function in endothelial cells and vascular smooth muscle cells, is also involved in immune system regulation. Modulator of vascular remodeling, promotes the migration of endothelial cells but inhibits the migration of vascular smooth muscle cells. Regulates endothelial sphingolipid biosynthesis with direct effects on vascular function and blood pressure. Inhibits serine palmitoyltransferase, SPTLC1, the rate-limiting enzyme of the novo sphingolipid biosynthetic pathway, thereby controlling production of endothelial sphingosine-1-phosphate (S1P). Required to promote macrophage homing and functions such as cytokine/chemokine gene expression involved in angiogenesis, arteriogenesis and tissue repair. Mediates ICAM1 induced transendothelial migration of leukocytes such as monocytes and neutrophils and acute inflammation. Necessary for immune responses triggered by nucleic acid sensing TLRs, such as TLR9, is required for proper TLR9 location to endolysosomes. Also involved in immune response to LPS. Plays a role in liver regeneration through the modulation of hepatocytes proliferation. Reduces the anti-apoptotic activity of Bcl-xl and Bcl-2. This is likely consecutive to their change in subcellular location, from the mitochondria to the endoplasmic reticulum, after binding and sequestration. With isoform C, inhibits BACE1 activity and amyloid precursor protein processing. Its function is as follows. Regulates cardiomyocyte apoptosis upon hypoxic conditions. With isoform B, inhibits BACE1 activity and amyloid precursor protein processing. This Mus musculus (Mouse) protein is Reticulon-4.